Here is a 775-residue protein sequence, read N- to C-terminus: K(+)-insensitive pyrophosphate-energized proton pump (775 aa).

5 consecutive transmembrane segments (helical) span residues 9-29 (SLAV…AFFI), 65-85 (ISIL…IIPP), 108-128 (AVAF…GMNV), 160-180 (MLTV…FGIA), and 185-205 (LLGF…GGGI). Position 208 (K208) interacts with substrate. Mg(2+) is bound by residues D211, D215, and D241. Transmembrane regions (helical) follow at residues 259–279 (VTLV…VGTI), 288–308 (FIIF…IGNL), 327–347 (FYIA…VFMV), 359–379 (FFAT…TEYF), 413–433 (SVWA…IYAG), and 442–462 (AILY…GNTI). D472 is a Mg(2+) binding site. 4 helical membrane-spanning segments follow: residues 508–528 (IAIG…FTDV), 555–575 (PVFI…ALTI), 622–642 (LISL…TLGV), and 644–664 (ALGG…VFQA). The Ca(2+) site is built by D671, D697, and D701. Substrate is bound at residue K704. Transmembrane regions (helical) follow at residues 710–730 (ALNP…PIVV) and 735–755 (GSPG…WAIW).

It belongs to the H(+)-translocating pyrophosphatase (TC 3.A.10) family. K(+)-insensitive subfamily. As to quaternary structure, homodimer. Requires Mg(2+) as cofactor.

The protein localises to the cell membrane. It carries out the reaction diphosphate + H2O + H(+)(in) = 2 phosphate + 2 H(+)(out). In terms of biological role, proton pump that utilizes the energy of pyrophosphate hydrolysis as the driving force for proton movement across the membrane. Generates a proton motive force. The protein is K(+)-insensitive pyrophosphate-energized proton pump of Chloroflexus aurantiacus (strain ATCC 29366 / DSM 635 / J-10-fl).